Consider the following 670-residue polypeptide: Methionine--tRNA ligase (670 aa).

Positions 14 to 24 (PYANGHLHLGH) match the 'HIGH' region motif. Zn(2+) contacts are provided by Cys-145, Cys-148, Cys-158, and Cys-161. The 'KMSKS' region motif lies at 330–334 (KMSKS). Lys-333 contacts ATP. A tRNA-binding domain is found at 570 to 670 (DFAKVDLRIA…AGALPGMKVK (101 aa)).

This sequence belongs to the class-I aminoacyl-tRNA synthetase family. MetG type 1 subfamily. In terms of assembly, homodimer. The cofactor is Zn(2+).

The protein resides in the cytoplasm. It catalyses the reaction tRNA(Met) + L-methionine + ATP = L-methionyl-tRNA(Met) + AMP + diphosphate. Its function is as follows. Is required not only for elongation of protein synthesis but also for the initiation of all mRNA translation through initiator tRNA(fMet) aminoacylation. The chain is Methionine--tRNA ligase from Legionella pneumophila (strain Paris).